A 504-amino-acid chain; its full sequence is Anaerobic nitric oxide reductase transcription regulator NorR (504 aa).

Residue aspartate 57 is modified to 4-aspartylphosphate. The Sigma-54 factor interaction domain occupies 187–416 (MIGLSPGMTQ…LEHAIHRAVV (230 aa)). Residues 215-222 (GETGTGKE) and 278-287 (ADNGTLFLDE) each bind ATP. A DNA-binding region (H-T-H motif) is located at residues 479 to 498 (WAACARMLETDVANLHRLAK).

It participates in nitrogen metabolism; nitric oxide reduction. Required for the expression of anaerobic nitric oxide (NO) reductase, acts as a transcriptional activator for at least the norVW operon. Activation also requires sigma-54. In Escherichia coli O139:H28 (strain E24377A / ETEC), this protein is Anaerobic nitric oxide reductase transcription regulator NorR.